Here is a 321-residue protein sequence, read N- to C-terminus: Pheromone-regulated membrane protein 5 (321 aa).

Residues 35 to 59 are disordered; that stretch reads SSSSSSSSLPLLSNSTSSSIIPSIT. A helical transmembrane segment spans residues 81–101; it reads FIIVGGIAGVIFLAILLWWVI. Serine 132 carries the post-translational modification Phosphoserine. Residues 241–250 show a composition bias toward low complexity; that stretch reads TISSSSASSL. A disordered region spans residues 241-321; it reads TISSSSASSL…HMLEGKEQDE (81 aa). The segment covering 253–264 has biased composition (basic and acidic residues); it reads GNEKEVGEDIRK. Residues 279–288 are compositionally biased toward polar residues; it reads SPESDGSVNR. Phosphoserine occurs at positions 282, 285, and 291. Positions 312–321 are enriched in basic and acidic residues; the sequence is HMLEGKEQDE. Residue lysine 317 forms a Glycyl lysine isopeptide (Lys-Gly) (interchain with G-Cter in ubiquitin) linkage.

It belongs to the PRM5 family.

The protein resides in the membrane. The chain is Pheromone-regulated membrane protein 5 (PRM5) from Saccharomyces cerevisiae (strain YJM789) (Baker's yeast).